The chain runs to 347 residues: Heat-inducible transcription repressor HrcA (347 aa).

Belongs to the HrcA family.

Negative regulator of class I heat shock genes (grpE-dnaK-dnaJ and groELS operons). Prevents heat-shock induction of these operons. The polypeptide is Heat-inducible transcription repressor HrcA (Lactococcus lactis subsp. cremoris (strain MG1363)).